Reading from the N-terminus, the 327-residue chain is uncharacterized protein (327 aa).

The 73-residue stretch at 12 to 84 (MRIDRYLTQQ…IPITILYEDD (73 aa)) folds into the S4 RNA-binding domain. Residue D137 is part of the active site.

Belongs to the pseudouridine synthase RluA family.

The enzyme catalyses a uridine in RNA = a pseudouridine in RNA. This is an uncharacterized protein from Chlorobaculum parvum (strain DSM 263 / NCIMB 8327) (Chlorobium vibrioforme subsp. thiosulfatophilum).